The sequence spans 582 residues: Pre-hexon-linking protein IIIa (582 aa).

The tract at residues 1–114 (MQRPAIIAER…ALLERVARYN (114 aa)) is peripentonal hexon-tethering domain. Positions 146-259 (GSLVALNAFL…FTNTNSLSRD (114 aa)) are binding to hexon-linking protein. Ser-233 carries the phosphoserine; by host modification. Residue Thr-282 is modified to Phosphothreonine; by host. A disordered region spans residues 437 to 479 (GKKEAGDEGPLLDSRASSPFPSLTSLPASVNSGRTTRPRLTGE). Positions 451-471 (RASSPFPSLTSLPASVNSGRT) are enriched in polar residues. Residues Ser-458 and Ser-465 each carry the phosphoserine; by host modification. Tyr-482 is subject to Phosphotyrosine; by host. Residue Ser-503 is modified to Phosphoserine; by host. Basic and acidic residues predominate over residues 517–526 (ERREWEERQP). The interval 517-582 (ERREWEERQP…RPQGCIGSLY (66 aa)) is disordered. Residues 530–543 (RPPRQRWQRRKKGA) are compositionally biased toward basic residues. Residues 566 to 582 (GNPFAHLRPQGCIGSLY) constitute a propeptide that is removed on maturation.

This sequence belongs to the adenoviridae hexon-linking protein IIIa family. In terms of assembly, interacts with hexon proteins; this interaction tethers the peripentonal hexons to hexons situated in the facet. Interacts with the penton protein (via N-terminus). Interacts with packaging protein 3; this interaction is required to promote correct genome packaging. Cleaved near the C-terminus by the viral protease during virion maturation to form the mature protein.

It localises to the virion. It is found in the host nucleus. Structural component of the virion that acts as a cement protein on the capsid exterior which mediates the interactions between the hexons, including the peripentonal hexons, and reaches all the way to the penton vertices. Two hexon linking proteins IIIa, one from each facet, stabilize the unique edge interface between a pair of facets. As the virus enters the host cell, hexon linking proteins IIIa are shed concomitant with virion acidification in the endosome. During virus assembly, seems to play a role in the serotype specificity of the packaging of viral DNA via its interaction with packaging protein 3. The polypeptide is Pre-hexon-linking protein IIIa (Human adenovirus A serotype 12 (HAdV-12)).